The chain runs to 265 residues: Small ribosomal subunit protein uS5 (265 aa).

Residues methionine 1–arginine 25 are compositionally biased toward low complexity. A disordered region spans residues methionine 1 to tryptophan 49. Residue alanine 2 is modified to N-acetylalanine. The S5 DRBM domain maps to leucine 89–valine 152.

Belongs to the universal ribosomal protein uS5 family.

Functionally, component of the ribosome, a large ribonucleoprotein complex responsible for the synthesis of proteins in the cell. The small ribosomal subunit (SSU) binds messenger RNAs (mRNAs) and translates the encoded message by selecting cognate aminoacyl-transfer RNA (tRNA) molecules. The large subunit (LSU) contains the ribosomal catalytic site termed the peptidyl transferase center (PTC), which catalyzes the formation of peptide bonds, thereby polymerizing the amino acids delivered by tRNAs into a polypeptide chain. The nascent polypeptides leave the ribosome through a tunnel in the LSU and interact with protein factors that function in enzymatic processing, targeting, and the membrane insertion of nascent chains at the exit of the ribosomal tunnel. Plays a role in the assembly and function of the 40S ribosomal subunit. Mutations in this protein affects the control of translational fidelity. Involved in nucleolar processing of pre-18S ribosomal RNA and ribosome assembly. This is Small ribosomal subunit protein uS5 (rps2) from Dictyostelium discoideum (Social amoeba).